The primary structure comprises 133 residues: Brain natriuretic peptide (133 aa).

An N-terminal signal peptide occupies residues 1 to 22 (MVVSFVSICGLLLIFNLPLSTS). The span at 44–53 (SMSEETEEDQ) shows a compositional bias: acidic residues. 2 disordered regions span residues 44 to 76 (SMSEETEEDQMVPANSESLEPVGSMKQTANRDQ) and 93 to 112 (TRKNVQNDSSRRSSSCFGRR). A disulfide bond links C108 and C124.

It belongs to the natriuretic peptide family.

It localises to the secreted. Its function is as follows. Cardiac hormone which may function as a paracrine antifibrotic factor in the heart. Also plays a key role in cardiovascular homeostasis through natriuresis, diuresis, vasorelaxation, and inhibition of renin and aldosterone secretion. Has a cGMP-stimulating activity. This chain is Brain natriuretic peptide (nppb), found in Takifugu rubripes (Japanese pufferfish).